The following is a 249-amino-acid chain: Imidazole glycerol phosphate synthase subunit HisF (249 aa).

Catalysis depends on residues Asp-11 and Asp-130.

This sequence belongs to the HisA/HisF family. Heterodimer of HisH and HisF.

It is found in the cytoplasm. It carries out the reaction 5-[(5-phospho-1-deoxy-D-ribulos-1-ylimino)methylamino]-1-(5-phospho-beta-D-ribosyl)imidazole-4-carboxamide + L-glutamine = D-erythro-1-(imidazol-4-yl)glycerol 3-phosphate + 5-amino-1-(5-phospho-beta-D-ribosyl)imidazole-4-carboxamide + L-glutamate + H(+). It functions in the pathway amino-acid biosynthesis; L-histidine biosynthesis; L-histidine from 5-phospho-alpha-D-ribose 1-diphosphate: step 5/9. In terms of biological role, IGPS catalyzes the conversion of PRFAR and glutamine to IGP, AICAR and glutamate. The HisF subunit catalyzes the cyclization activity that produces IGP and AICAR from PRFAR using the ammonia provided by the HisH subunit. The chain is Imidazole glycerol phosphate synthase subunit HisF from Exiguobacterium sibiricum (strain DSM 17290 / CCUG 55495 / CIP 109462 / JCM 13490 / 255-15).